The chain runs to 207 residues: Guanylate kinase (207 aa).

The Guanylate kinase-like domain occupies Gly6–Glu185. Gly13 to Gly20 lines the ATP pocket.

The protein belongs to the guanylate kinase family.

It is found in the cytoplasm. The catalysed reaction is GMP + ATP = GDP + ADP. In terms of biological role, essential for recycling GMP and indirectly, cGMP. The sequence is that of Guanylate kinase from Staphylococcus haemolyticus (strain JCSC1435).